The sequence spans 500 residues: AAA-ATPase At3g28580 (500 aa).

The helical transmembrane segment at 7–29 (LWTNTGSALATLMFVYTIFKQFF) threads the bilayer. The segment at 174–193 (NRERKLYSNTPGQSHGNNSK) is disordered. Polar residues predominate over residues 180–193 (YSNTPGQSHGNNSK). 247–254 (GPPGTGKS) is a binding site for ATP. The disordered stretch occupies residues 462–500 (KEEAKKKVEEEEEEKQRKKEKVKEIEAEKEKKKKIEEEN).

Belongs to the AAA ATPase family. BCS1 subfamily. Requires Mg(2+) as cofactor.

It is found in the membrane. The enzyme catalyses ATP + H2O = ADP + phosphate + H(+). In Arabidopsis thaliana (Mouse-ear cress), this protein is AAA-ATPase At3g28580.